A 652-amino-acid chain; its full sequence is DNA ligase (652 aa).

Residues 29–33 (DSQYD), 78–79 (SL), and glutamate 107 each bind NAD(+). The active-site N6-AMP-lysine intermediate is the lysine 109. 4 residues coordinate NAD(+): arginine 130, glutamate 164, lysine 278, and lysine 302. Residues cysteine 395, cysteine 398, cysteine 413, and cysteine 418 each contribute to the Zn(2+) site. One can recognise a BRCT domain in the interval 577 to 652 (STDAQLSGLT…IQDEDWLLNL (76 aa)).

This sequence belongs to the NAD-dependent DNA ligase family. LigA subfamily. Mg(2+) serves as cofactor. It depends on Mn(2+) as a cofactor.

The catalysed reaction is NAD(+) + (deoxyribonucleotide)n-3'-hydroxyl + 5'-phospho-(deoxyribonucleotide)m = (deoxyribonucleotide)n+m + AMP + beta-nicotinamide D-nucleotide.. Its function is as follows. DNA ligase that catalyzes the formation of phosphodiester linkages between 5'-phosphoryl and 3'-hydroxyl groups in double-stranded DNA using NAD as a coenzyme and as the energy source for the reaction. It is essential for DNA replication and repair of damaged DNA. This chain is DNA ligase, found in Streptococcus agalactiae serotype III (strain NEM316).